The primary structure comprises 265 residues: MKNNKKISSIRIATTGANGKMGKQITRTAINISKIIHTSSLVRHKSSFKNYDIGKLANIFPIGVFTNDNIKDISDKFDVLIDFTSVKSSLEYLNFCYKNKKKMVIGTTGFNAMQNKLIKHMSKKIAIFYSENFSFGANIIFRLLKNISSIGNIKNIDIDIIECHHKEKSDIPSATSILIKKNILKNLKIKKNIKISSIRSGNIIGEHKIIFSFLGEKIEITHQAYNRKIFALGAIKAAIWLSNKKTGLFNMSHILNKQAKNFKSN.

16 to 21 (GANGKM) contacts NAD(+). Arg-43 contacts NADP(+). NAD(+) contacts are provided by residues 106–108 (GTT) and 130–133 (SENF). His-164 acts as the Proton donor/acceptor in catalysis. His-165 lines the (S)-2,3,4,5-tetrahydrodipicolinate pocket. Lys-168 acts as the Proton donor in catalysis. 174-175 (AT) provides a ligand contact to (S)-2,3,4,5-tetrahydrodipicolinate.

This sequence belongs to the DapB family. As to quaternary structure, homotetramer.

Its subcellular location is the cytoplasm. The enzyme catalyses (S)-2,3,4,5-tetrahydrodipicolinate + NAD(+) + H2O = (2S,4S)-4-hydroxy-2,3,4,5-tetrahydrodipicolinate + NADH + H(+). The catalysed reaction is (S)-2,3,4,5-tetrahydrodipicolinate + NADP(+) + H2O = (2S,4S)-4-hydroxy-2,3,4,5-tetrahydrodipicolinate + NADPH + H(+). It participates in amino-acid biosynthesis; L-lysine biosynthesis via DAP pathway; (S)-tetrahydrodipicolinate from L-aspartate: step 4/4. Catalyzes the conversion of 4-hydroxy-tetrahydrodipicolinate (HTPA) to tetrahydrodipicolinate. The chain is 4-hydroxy-tetrahydrodipicolinate reductase from Wigglesworthia glossinidia brevipalpis.